The chain runs to 347 residues: GMP reductase (347 aa).

108–131 (ADFQKTKDIMALTDDLIFICIDIA) lines the NADP(+) pocket. Residues Gly-181 and Gly-183 each contribute to the K(+) site. Cys-186 acts as the Thioimidate intermediate in catalysis. 216-239 (IIGDGGCSCAGDVSKAFGGGADFV) provides a ligand contact to NADP(+).

Belongs to the IMPDH/GMPR family. GuaC type 1 subfamily. As to quaternary structure, homotetramer.

It carries out the reaction IMP + NH4(+) + NADP(+) = GMP + NADPH + 2 H(+). In terms of biological role, catalyzes the irreversible NADPH-dependent deamination of GMP to IMP. It functions in the conversion of nucleobase, nucleoside and nucleotide derivatives of G to A nucleotides, and in maintaining the intracellular balance of A and G nucleotides. This chain is GMP reductase, found in Aliivibrio fischeri (strain MJ11) (Vibrio fischeri).